Consider the following 418-residue polypeptide: Gamma-glutamyl phosphate reductase (418 aa).

The protein belongs to the gamma-glutamyl phosphate reductase family.

It localises to the cytoplasm. It carries out the reaction L-glutamate 5-semialdehyde + phosphate + NADP(+) = L-glutamyl 5-phosphate + NADPH + H(+). It participates in amino-acid biosynthesis; L-proline biosynthesis; L-glutamate 5-semialdehyde from L-glutamate: step 2/2. Catalyzes the NADPH-dependent reduction of L-glutamate 5-phosphate into L-glutamate 5-semialdehyde and phosphate. The product spontaneously undergoes cyclization to form 1-pyrroline-5-carboxylate. The chain is Gamma-glutamyl phosphate reductase from Dechloromonas aromatica (strain RCB).